The chain runs to 282 residues: D-alanine aminotransferase (282 aa).

Substrate is bound at residue tyrosine 32. Position 51 (arginine 51) interacts with pyridoxal 5'-phosphate. Residues arginine 99 and histidine 101 each coordinate substrate. Catalysis depends on lysine 146, which acts as the Proton acceptor. The residue at position 146 (lysine 146) is an N6-(pyridoxal phosphate)lysine. Glutamate 178 contributes to the pyridoxal 5'-phosphate binding site.

This sequence belongs to the class-IV pyridoxal-phosphate-dependent aminotransferase family. In terms of assembly, homodimer. Pyridoxal 5'-phosphate is required as a cofactor.

It carries out the reaction D-alanine + 2-oxoglutarate = D-glutamate + pyruvate. Its function is as follows. Acts on the D-isomers of alanine, leucine, aspartate, glutamate, aminobutyrate, norvaline and asparagine. The enzyme transfers an amino group from a substrate D-amino acid to the pyridoxal phosphate cofactor to form pyridoxamine and an alpha-keto acid in the first half-reaction. The second half-reaction is the reverse of the first, transferring the amino group from the pyridoxamine to a second alpha-keto acid to form the product D-amino acid via a ping-pong mechanism. This is an important process in the formation of D-alanine and D-glutamate, which are essential bacterial cell wall components. This chain is D-alanine aminotransferase (dat), found in Staphylococcus haemolyticus.